Reading from the N-terminus, the 228-residue chain is Cytochrome c oxidase subunit 2 (228 aa).

Over M1 to H26 the chain is Mitochondrial intermembrane. The helical transmembrane segment at T27–N48 threads the bilayer. At K49–E62 the chain is on the mitochondrial matrix side. Residues L63–R82 form a helical membrane-spanning segment. Over L83 to S228 the chain is Mitochondrial intermembrane. Residues H161, C196, E198, C200, H204, and M207 each coordinate Cu cation. E198 contributes to the Mg(2+) binding site.

Belongs to the cytochrome c oxidase subunit 2 family. In terms of assembly, component of the cytochrome c oxidase (complex IV, CIV), a multisubunit enzyme composed of a catalytic core of 3 subunits and several supernumerary subunits. The complex exists as a monomer or a dimer and forms supercomplexes (SCs) in the inner mitochondrial membrane with ubiquinol-cytochrome c oxidoreductase (cytochrome b-c1 complex, complex III, CIII). Cu cation serves as cofactor.

It is found in the mitochondrion inner membrane. It catalyses the reaction 4 Fe(II)-[cytochrome c] + O2 + 8 H(+)(in) = 4 Fe(III)-[cytochrome c] + 2 H2O + 4 H(+)(out). In terms of biological role, component of the cytochrome c oxidase, the last enzyme in the mitochondrial electron transport chain which drives oxidative phosphorylation. The respiratory chain contains 3 multisubunit complexes succinate dehydrogenase (complex II, CII), ubiquinol-cytochrome c oxidoreductase (cytochrome b-c1 complex, complex III, CIII) and cytochrome c oxidase (complex IV, CIV), that cooperate to transfer electrons derived from NADH and succinate to molecular oxygen, creating an electrochemical gradient over the inner membrane that drives transmembrane transport and the ATP synthase. Cytochrome c oxidase is the component of the respiratory chain that catalyzes the reduction of oxygen to water. Electrons originating from reduced cytochrome c in the intermembrane space (IMS) are transferred via the dinuclear copper A center (CU(A)) of subunit 2 and heme A of subunit 1 to the active site in subunit 1, a binuclear center (BNC) formed by heme A3 and copper B (CU(B)). The BNC reduces molecular oxygen to 2 water molecules using 4 electrons from cytochrome c in the IMS and 4 protons from the mitochondrial matrix. This chain is Cytochrome c oxidase subunit 2 (COII), found in Yponomeuta malinellus (European small ermine moth).